Reading from the N-terminus, the 777-residue chain is Putative P4-specific DNA primase (777 aa).

The CHC2-type zinc finger occupies cysteine 35–cysteine 60. The 89-residue stretch at lysine 208–threonine 296 folds into the Toprim domain. The 154-residue stretch at glutamate 474–leucine 627 folds into the SF3 helicase domain. Residue glycine 501 to serine 508 coordinates ATP.

As to quaternary structure, homohexamer.

It carries out the reaction ATP + H2O = ADP + phosphate + H(+). Its function is as follows. This protein acts as a DNA primase generating di- to pentaribonucleotides; the predominant product being the dimer pppApG. It complexes specifically to the P4 origin of replication (ori) and its cis replication region (crr). It also acts as a DNA helicase. The sequence is that of Putative P4-specific DNA primase (Alpha) from Escherichia coli (Bacteriophage P4).